The following is a 123-amino-acid chain: Small ribosomal subunit protein uS12 (123 aa).

D89 is subject to 3-methylthioaspartic acid.

Belongs to the universal ribosomal protein uS12 family. Part of the 30S ribosomal subunit. Contacts proteins S8 and S17. May interact with IF1 in the 30S initiation complex.

Functionally, with S4 and S5 plays an important role in translational accuracy. Its function is as follows. Interacts with and stabilizes bases of the 16S rRNA that are involved in tRNA selection in the A site and with the mRNA backbone. Located at the interface of the 30S and 50S subunits, it traverses the body of the 30S subunit contacting proteins on the other side and probably holding the rRNA structure together. The combined cluster of proteins S8, S12 and S17 appears to hold together the shoulder and platform of the 30S subunit. The protein is Small ribosomal subunit protein uS12 of Rhodopseudomonas palustris (strain HaA2).